The primary structure comprises 345 residues: Eukaryotic translation initiation factor 3 subunit F (345 aa).

An MPN domain is found at 30–166 (VVIQPQAIFS…TRAYISAPVG (137 aa)). The tract at residues 310–345 (EGASAEAGAQRGQRGGKGGRGGQQRTQERASEEVRA) is disordered. A compositionally biased stretch (low complexity) spans 312–321 (ASAEAGAQRG). Residues 322 to 331 (QRGGKGGRGG) show a composition bias toward gly residues. Residues 335–345 (TQERASEEVRA) show a composition bias toward basic and acidic residues.

This sequence belongs to the eIF-3 subunit F family. Component of the eukaryotic translation initiation factor 3 (eIF-3) complex.

The protein resides in the cytoplasm. Component of the eukaryotic translation initiation factor 3 (eIF-3) complex, which is involved in protein synthesis of a specialized repertoire of mRNAs and, together with other initiation factors, stimulates binding of mRNA and methionyl-tRNAi to the 40S ribosome. The eIF-3 complex specifically targets and initiates translation of a subset of mRNAs involved in cell proliferation. This is Eukaryotic translation initiation factor 3 subunit F from Aspergillus fumigatus (strain CBS 144.89 / FGSC A1163 / CEA10) (Neosartorya fumigata).